We begin with the raw amino-acid sequence, 473 residues long: ATP synthase subunit beta (473 aa).

158-165 (GGAGVGKT) serves as a coordination point for ATP.

It belongs to the ATPase alpha/beta chains family. F-type ATPases have 2 components, CF(1) - the catalytic core - and CF(0) - the membrane proton channel. CF(1) has five subunits: alpha(3), beta(3), gamma(1), delta(1), epsilon(1). CF(0) has three main subunits: a(1), b(2) and c(9-12). The alpha and beta chains form an alternating ring which encloses part of the gamma chain. CF(1) is attached to CF(0) by a central stalk formed by the gamma and epsilon chains, while a peripheral stalk is formed by the delta and b chains.

It is found in the cell membrane. The enzyme catalyses ATP + H2O + 4 H(+)(in) = ADP + phosphate + 5 H(+)(out). Functionally, produces ATP from ADP in the presence of a proton gradient across the membrane. The catalytic sites are hosted primarily by the beta subunits. In Bacillus sp. (strain PS3), this protein is ATP synthase subunit beta.